The sequence spans 378 residues: Zinc transporter 7 (378 aa).

The Cytoplasmic segment spans residues 1–37 (MLPLSIKDDEYKPPRLNLFRKMSGWFRSILADKTSRN). A helical transmembrane segment spans residues 38–58 (LFFFLCLNLSFAFVELLYGVW). The Lumenal portion of the chain corresponds to 59–67 (SNSLGLISD). A helical transmembrane segment spans residues 68–88 (SFHMFFDCTALLAGLAASVIS). At 89–102 (KWRSNDAFSYGYVR) the chain is on the cytoplasmic side. A helical membrane pass occupies residues 103-123 (AEVLAGFVNGLFLIFTAFFIF). The Lumenal segment spans residues 124–140 (SEGVERALEPPDVHHER). A helical membrane pass occupies residues 141-161 (LLPVSILGFIVNLIGIFVFQH). Residues 161-223 (HGGHGHSHGS…HGQDYCHDDH (63 aa)) are his-rich loop. Residues 162–238 (GGHGHSHGSG…TGSSKQILQG (77 aa)) lie on the Cytoplasmic side of the membrane. The tract at residues 185–214 (HGHSHRGHGHSHEHKHGHTHDHGHSHGLSH) is disordered. Over residues 186–211 (GHSHRGHGHSHEHKHGHTHDHGHSHG) the composition is skewed to basic residues. Residues 239-259 (VFLHIVADTLGSIGVIISAIL) form a helical membrane-spanning segment. Residues 260–264 (MQNYG) are Lumenal-facing. Residues 265 to 285 (LMIADPICSMLIALLIGVSIV) form a helical membrane-spanning segment. Over 286 to 378 (PLLKESIGIL…LYIQIDVAAM (93 aa)) the chain is Cytoplasmic.

The protein belongs to the cation diffusion facilitator (CDF) transporter (TC 2.A.4) family. SLC30A subfamily. As to quaternary structure, homooligomer.

The protein resides in the golgi apparatus membrane. It is found in the cytoplasmic vesicle. Its subcellular location is the golgi apparatus. The protein localises to the trans-Golgi network. It localises to the sarcoplasmic reticulum. The protein resides in the mitochondrion. It carries out the reaction Zn(2+)(in) = Zn(2+)(out). In terms of biological role, zinc ion transporter mediating zinc entry from the cytosol into the lumen of organelles along the secretory pathway. By contributing to zinc ion homeostasis within the early secretory pathway, regulates the activation and folding of enzymes like alkaline phosphatases. The sequence is that of Zinc transporter 7 (SLC30A7) from Gallus gallus (Chicken).